The following is an 89-amino-acid chain: Small ribosomal subunit protein uS15 (89 aa).

It belongs to the universal ribosomal protein uS15 family. As to quaternary structure, part of the 30S ribosomal subunit. Forms a bridge to the 50S subunit in the 70S ribosome, contacting the 23S rRNA.

Its function is as follows. One of the primary rRNA binding proteins, it binds directly to 16S rRNA where it helps nucleate assembly of the platform of the 30S subunit by binding and bridging several RNA helices of the 16S rRNA. Forms an intersubunit bridge (bridge B4) with the 23S rRNA of the 50S subunit in the ribosome. In Nitrosococcus oceani (strain ATCC 19707 / BCRC 17464 / JCM 30415 / NCIMB 11848 / C-107), this protein is Small ribosomal subunit protein uS15.